The following is a 110-amino-acid chain: U1-lycotoxin-Ls1dd (110 aa).

A signal peptide spans Met1–Ala20. Residues Glu21–Arg44 constitute a propeptide that is removed on maturation. Intrachain disulfides connect Cys47–Cys62, Cys54–Cys71, Cys61–Cys89, and Cys73–Cys87.

It belongs to the neurotoxin 19 (CSTX) family. 03 subfamily. Expressed by the venom gland.

It is found in the secreted. In Lycosa singoriensis (Wolf spider), this protein is U1-lycotoxin-Ls1dd.